The chain runs to 428 residues: 3-deoxy-D-manno-octulosonic acid transferase (428 aa).

Glu-64 acts as the Proton acceptor in catalysis. Residues 274–275 (PR), 316–318 (LGE), and 342–345 (NLIE) contribute to the CMP site.

It belongs to the glycosyltransferase group 1 family. Glycosyltransferase 30 subfamily.

The protein localises to the cell inner membrane. The enzyme catalyses lipid IVA (E. coli) + CMP-3-deoxy-beta-D-manno-octulosonate = alpha-Kdo-(2-&gt;6)-lipid IVA (E. coli) + CMP + H(+). Its pathway is bacterial outer membrane biogenesis; LPS core biosynthesis. Its function is as follows. Involved in lipopolysaccharide (LPS) biosynthesis. Catalyzes the transfer of a single 3-deoxy-D-manno-octulosonate (Kdo) residue from CMP-Kdo to lipid IV(A), the tetraacyldisaccharide-1,4'-bisphosphate precursor of lipid A. This is 3-deoxy-D-manno-octulosonic acid transferase (waaA) from Bordetella pertussis.